A 525-amino-acid chain; its full sequence is GMP synthase [glutamine-hydrolyzing] (525 aa).

Residues 9 to 207 (RILILDFGSQ…VRDICQCEAL (199 aa)) enclose the Glutamine amidotransferase type-1 domain. The active-site Nucleophile is cysteine 86. Residues histidine 181 and glutamate 183 contribute to the active site. Residues 208–400 (WTPAKIIDDA…LGLPYDMLYR (193 aa)) form the GMPS ATP-PPase domain. 235–241 (SGGVDSS) lines the ATP pocket.

Homodimer.

The catalysed reaction is XMP + L-glutamine + ATP + H2O = GMP + L-glutamate + AMP + diphosphate + 2 H(+). It participates in purine metabolism; GMP biosynthesis; GMP from XMP (L-Gln route): step 1/1. Functionally, catalyzes the synthesis of GMP from XMP. The sequence is that of GMP synthase [glutamine-hydrolyzing] from Escherichia coli O17:K52:H18 (strain UMN026 / ExPEC).